Reading from the N-terminus, the 627-residue chain is Carene synthase 3, chloroplastic (627 aa).

Residues Met1–Leu36 constitute a chloroplast transit peptide. The Mg(2+) site is built by Asp378, Asp382, and Asp530. Positions Asp378 to Asp382 match the DDXXD motif motif.

This sequence belongs to the terpene synthase family. Tpsd subfamily. Requires Mg(2+) as cofactor. Mn(2+) is required as a cofactor.

Its subcellular location is the plastid. The protein localises to the chloroplast. The enzyme catalyses (2E)-geranyl diphosphate = (+)-car-3-ene + diphosphate. The protein operates within terpene metabolism; oleoresin biosynthesis. Terpene synthase (TPS) involved in defensive oleoresin formation in conifers in response to insect attack or other injury. This Picea sitchensis (Sitka spruce) protein is Carene synthase 3, chloroplastic (TPS-3car3).